Consider the following 177-residue polypeptide: Large ribosomal subunit protein uL6 (177 aa).

Belongs to the universal ribosomal protein uL6 family. In terms of assembly, part of the 50S ribosomal subunit.

Functionally, this protein binds to the 23S rRNA, and is important in its secondary structure. It is located near the subunit interface in the base of the L7/L12 stalk, and near the tRNA binding site of the peptidyltransferase center. The polypeptide is Large ribosomal subunit protein uL6 (Agrobacterium fabrum (strain C58 / ATCC 33970) (Agrobacterium tumefaciens (strain C58))).